The following is a 240-amino-acid chain: Urease accessory protein UreD (240 aa).

It belongs to the UreD family. In terms of assembly, ureD, UreF and UreG form a complex that acts as a GTP-hydrolysis-dependent molecular chaperone, activating the urease apoprotein by helping to assemble the nickel containing metallocenter of UreC. The UreE protein probably delivers the nickel.

The protein resides in the cytoplasm. Functionally, required for maturation of urease via the functional incorporation of the urease nickel metallocenter. The protein is Urease accessory protein UreD of Granulibacter bethesdensis (strain ATCC BAA-1260 / CGDNIH1).